A 590-amino-acid polypeptide reads, in one-letter code: Phosphomethylpyrimidine synthase (590 aa).

Substrate contacts are provided by residues Asn-197, Met-226, Tyr-255, His-291, 311-313, 352-355, and Glu-391; these read SRG and DGLR. His-395 lines the Zn(2+) pocket. Tyr-418 lines the substrate pocket. His-459 provides a ligand contact to Zn(2+). [4Fe-4S] cluster is bound by residues Cys-539, Cys-542, and Cys-547.

This sequence belongs to the ThiC family. The cofactor is [4Fe-4S] cluster.

The catalysed reaction is 5-amino-1-(5-phospho-beta-D-ribosyl)imidazole + S-adenosyl-L-methionine = 4-amino-2-methyl-5-(phosphooxymethyl)pyrimidine + CO + 5'-deoxyadenosine + formate + L-methionine + 3 H(+). It participates in cofactor biosynthesis; thiamine diphosphate biosynthesis. Catalyzes the synthesis of the hydroxymethylpyrimidine phosphate (HMP-P) moiety of thiamine from aminoimidazole ribotide (AIR) in a radical S-adenosyl-L-methionine (SAM)-dependent reaction. The sequence is that of Phosphomethylpyrimidine synthase from Bacillus subtilis (strain 168).